Consider the following 386-residue polypeptide: Succinate--CoA ligase [ADP-forming] subunit beta (386 aa).

The ATP-grasp domain maps to 9-244 (KEILRKYGVP…HDEEDPLETR (236 aa)). ATP contacts are provided by residues K46, 53–55 (GRG), E99, C102, and E107. Mg(2+) is bound by residues N199 and D213. Substrate-binding positions include N264 and 321 to 323 (GIM).

The protein belongs to the succinate/malate CoA ligase beta subunit family. In terms of assembly, heterotetramer of two alpha and two beta subunits. Requires Mg(2+) as cofactor.

The catalysed reaction is succinate + ATP + CoA = succinyl-CoA + ADP + phosphate. It carries out the reaction GTP + succinate + CoA = succinyl-CoA + GDP + phosphate. It participates in carbohydrate metabolism; tricarboxylic acid cycle; succinate from succinyl-CoA (ligase route): step 1/1. Succinyl-CoA synthetase functions in the citric acid cycle (TCA), coupling the hydrolysis of succinyl-CoA to the synthesis of either ATP or GTP and thus represents the only step of substrate-level phosphorylation in the TCA. The beta subunit provides nucleotide specificity of the enzyme and binds the substrate succinate, while the binding sites for coenzyme A and phosphate are found in the alpha subunit. The chain is Succinate--CoA ligase [ADP-forming] subunit beta from Rickettsia peacockii (strain Rustic).